A 362-amino-acid chain; its full sequence is 3-dehydroquinate synthase (362 aa).

It belongs to the archaeal-type DHQ synthase family.

It carries out the reaction 2-amino-2,3,7-trideoxy-D-lyxo-hept-6-ulosonate + NAD(+) + H2O = 3-dehydroquinate + NH4(+) + NADH + H(+). Catalyzes the oxidative deamination and cyclization of 2-amino-3,7-dideoxy-D-threo-hept-6-ulosonic acid (ADH) to yield 3-dehydroquinate (DHQ), which is fed into the canonical shikimic pathway of aromatic amino acid biosynthesis. The chain is 3-dehydroquinate synthase from Methanothrix thermoacetophila (strain DSM 6194 / JCM 14653 / NBRC 101360 / PT) (Methanosaeta thermophila).